Here is a 175-residue protein sequence, read N- to C-terminus: Peptide deformylase (175 aa).

Fe cation is bound by residues C96 and H138. Residue E139 is part of the active site. H142 is a binding site for Fe cation.

Belongs to the polypeptide deformylase family. It depends on Fe(2+) as a cofactor.

It carries out the reaction N-terminal N-formyl-L-methionyl-[peptide] + H2O = N-terminal L-methionyl-[peptide] + formate. Its function is as follows. Removes the formyl group from the N-terminal Met of newly synthesized proteins. Requires at least a dipeptide for an efficient rate of reaction. N-terminal L-methionine is a prerequisite for activity but the enzyme has broad specificity at other positions. The sequence is that of Peptide deformylase from Campylobacter jejuni subsp. jejuni serotype O:2 (strain ATCC 700819 / NCTC 11168).